The chain runs to 267 residues: Regulatory protein VirG (267 aa).

The Response regulatory domain occupies 29 to 143; sequence HVLLVDDDVA…EFLARIRVAL (115 aa). At Asp-78 the chain carries 4-aspartylphosphate. A DNA-binding region (ompR/PhoB-type) is located at residues 155–255; the sequence is RRSFCFTDWT…ARGAGYFFDA (101 aa).

Post-translationally, phosphorylated by wide host range (WHR) VirA protein.

The protein localises to the cytoplasm. Its function is as follows. VirG is required for the positive regulation of at least two vir loci encoded by the Ti plasmid of A.tumefaciens. In Agrobacterium tumefaciens (strain 15955), this protein is Regulatory protein VirG (virG).